Here is a 2035-residue protein sequence, read N- to C-terminus: Ral GTPase-activating protein subunit alpha-1 (2035 aa).

Disordered stretches follow at residues 343-384 (LVSR…SSLC) and 477-496 (DGEK…VRNS). Residues 345-365 (SREESKNDTVDKVDKSAEPEQ) show a composition bias toward basic and acidic residues. Polar residues-rich tracts occupy residues 366–384 (SHSN…SSLC) and 486–496 (GTSTSEHVRNS). Phosphoserine is present on residues Ser-710 and Ser-720. Residues 714-752 (SFSRGWSRDQPGQAPMRQRSATTTGSPGTEKARSIVRQK) are disordered. Thr-753 bears the Phosphothreonine mark. Phosphoserine is present on Ser-772. Thr-777 bears the Phosphothreonine mark. Ser-796 carries the phosphoserine modification. Residues 807 to 817 (ERAKVNKEDTS) show a composition bias toward basic and acidic residues. Disordered regions lie at residues 807-834 (ERAK…SANV) and 848-911 (SGNA…SHSD). Polar residues-rich tracts occupy residues 824–833 (NSETGGNSAN) and 849–862 (GNAS…SSPG). Residues Ser-859, Ser-860, and Ser-863 each carry the phosphoserine modification. Over residues 894-911 (SPASAGSSDLMSSDSHSD) the composition is skewed to low complexity. 4 positions are modified to phosphoserine: Ser-985, Ser-989, Ser-993, and Ser-999. A compositionally biased stretch (polar residues) spans 986 to 1008 (ESASPVHSALGSRSQTPSPSTLS). Residues 986 to 1011 (ESASPVHSALGSRSQTPSPSTLSRAH) are disordered. Thr-1001 carries the post-translational modification Phosphothreonine. Ser-1003 and Ser-1477 each carry phosphoserine. The minimal domain that binds to TCF3/E12 stretch occupies residues 1326–2035 (FTNKTVAHVA…YHHFPADADH (710 aa)). Residues 1713–1748 (SEKQENDVINAILKQYTEEKEFVEKHFNDLNMKASE) are a coiled coil. In terms of domain architecture, Rap-GAP spans 1795-2003 (LRNLDSRQCR…EERARYLQTI (209 aa)).

Component of the heterodimeric RalGAP1 complex with RALGAPB. Heterodimerization is required for activity. Interacts with the HLH region of TCF3/isoform E12. In terms of tissue distribution, expressed during embryogenesis. Expressed in the adult brain, particularly in neurons of the cortex and hippocampus.

The protein localises to the cytoplasm. Its subcellular location is the nucleus. Catalytic subunit of the heterodimeric RalGAP1 complex which acts as a GTPase activator for the Ras-like small GTPases RALA and RALB. May interact with the HLH region of TCF3/isoform E12. This is Ral GTPase-activating protein subunit alpha-1 (Ralgapa1) from Mus musculus (Mouse).